The sequence spans 154 residues: Protein-export protein SecB (154 aa).

The protein belongs to the SecB family. In terms of assembly, homotetramer, a dimer of dimers. One homotetramer interacts with 1 SecA dimer.

The protein resides in the cytoplasm. Its function is as follows. One of the proteins required for the normal export of preproteins out of the cell cytoplasm. It is a molecular chaperone that binds to a subset of precursor proteins, maintaining them in a translocation-competent state. It also specifically binds to its receptor SecA. The polypeptide is Protein-export protein SecB (Vibrio parahaemolyticus serotype O3:K6 (strain RIMD 2210633)).